We begin with the raw amino-acid sequence, 411 residues long: Snake venom metalloproteinase VMP1 (411 aa).

The signal sequence occupies residues 1-20; sequence MIQVLLVTICLAAFPYQGSS. The propeptide occupies 21 to 189; sequence IILESGNVND…KKAFQLNLTP (169 aa). The region spanning 197-393 is the Peptidase M12B domain; it reads RYVELVIIAD…KNPQCILNKP (197 aa). Positions 200 and 284 each coordinate Ca(2+). Intrachain disulfides connect Cys308-Cys388, Cys348-Cys372, and Cys350-Cys355. N-linked (GlcNAc...) asparagine glycosylation is present at Asn311. His333 serves as a coordination point for Zn(2+). The active site involves Glu334. 2 residues coordinate Zn(2+): His337 and His343. The Ca(2+) site is built by Cys388, Asn391, Val403, Asn406, Leu408, and Glu410.

The protein belongs to the venom metalloproteinase (M12B) family. P-I subfamily. Monomer. Zn(2+) is required as a cofactor. In terms of tissue distribution, expressed by the venom gland.

The protein localises to the secreted. Inhibited by EDTA and 1,10-phenanthroline, but not by PMSF. In terms of biological role, this venom zinc protease has fibrinolytic activity. The recombinant enzyme cleaves both alpha- (FGA) and beta-chains (FGB) of fibrinogen, but not the gamma-chain. The recombinant protein does not produce hemorrhage in mice and does not have effect on ADP- or collagen-stimulated platelet aggregation. The sequence is that of Snake venom metalloproteinase VMP1 from Agkistrodon piscivorus leucostoma (Western cottonmouth).